A 136-amino-acid polypeptide reads, in one-letter code: MVAAAAVAVAAVGARSAGRWLAALRSPGASRAAMSSDAQWLTAEERDQLIPGLKAAGWSELSERDAIYKEFSFKNFNQAFGFMSRVALQAEKMNHHPEWFNVYNKVQITLTSHDCGGLTKRDVKLAQFIEKAAASL.

N6-acetyllysine; alternate is present on residues Lys-120, Lys-124, and Lys-131. N6-succinyllysine; alternate occurs at positions 120, 124, and 131.

The protein belongs to the pterin-4-alpha-carbinolamine dehydratase family. As to quaternary structure, homotetramer. Interacts with DYRK1B.

The catalysed reaction is (4aS,6R)-4a-hydroxy-L-erythro-5,6,7,8-tetrahydrobiopterin = (6R)-L-erythro-6,7-dihydrobiopterin + H2O. Functionally, involved in tetrahydrobiopterin biosynthesis. Seems to both prevent the formation of 7-pterins and accelerate the formation of quinonoid-BH2. In terms of biological role, regulates the dimerization of homeodomain protein HNF-1-alpha and enhances its transcriptional activity. The sequence is that of Pterin-4-alpha-carbinolamine dehydratase 2 (Pcbd2) from Mus musculus (Mouse).